The following is a 313-amino-acid chain: Ribosomal RNA small subunit methyltransferase H (313 aa).

Residues 35-37, Asp55, Phe79, Asp101, and Gln108 each bind S-adenosyl-L-methionine; that span reads GGH.

This sequence belongs to the methyltransferase superfamily. RsmH family.

It localises to the cytoplasm. The catalysed reaction is cytidine(1402) in 16S rRNA + S-adenosyl-L-methionine = N(4)-methylcytidine(1402) in 16S rRNA + S-adenosyl-L-homocysteine + H(+). Functionally, specifically methylates the N4 position of cytidine in position 1402 (C1402) of 16S rRNA. In Escherichia coli O81 (strain ED1a), this protein is Ribosomal RNA small subunit methyltransferase H.